The primary structure comprises 89 residues: Small ribosomal subunit protein uS19 (89 aa).

The protein belongs to the universal ribosomal protein uS19 family.

Its function is as follows. Protein S19 forms a complex with S13 that binds strongly to the 16S ribosomal RNA. This Phocaeicola vulgatus (strain ATCC 8482 / DSM 1447 / JCM 5826 / CCUG 4940 / NBRC 14291 / NCTC 11154) (Bacteroides vulgatus) protein is Small ribosomal subunit protein uS19.